Here is a 228-residue protein sequence, read N- to C-terminus: 7-cyano-7-deazaguanine synthase (228 aa).

7–17 (LSGGMDSLVTT) contacts ATP. Residues cysteine 187, cysteine 195, cysteine 198, and cysteine 201 each coordinate Zn(2+).

The protein belongs to the QueC family. Requires Zn(2+) as cofactor.

It carries out the reaction 7-carboxy-7-deazaguanine + NH4(+) + ATP = 7-cyano-7-deazaguanine + ADP + phosphate + H2O + H(+). It participates in purine metabolism; 7-cyano-7-deazaguanine biosynthesis. Its function is as follows. Catalyzes the ATP-dependent conversion of 7-carboxy-7-deazaguanine (CDG) to 7-cyano-7-deazaguanine (preQ(0)). The protein is 7-cyano-7-deazaguanine synthase of Chlorobium chlorochromatii (strain CaD3).